A 610-amino-acid chain; its full sequence is Dihydroxy-acid dehydratase (610 aa).

D81 is a binding site for Mg(2+). C122 serves as a coordination point for [2Fe-2S] cluster. Mg(2+) is bound by residues D123 and K124. K124 is modified (N6-carboxylysine). Position 193 (C193) interacts with [2Fe-2S] cluster. E489 contributes to the Mg(2+) binding site. S515 (proton acceptor) is an active-site residue.

Belongs to the IlvD/Edd family. In terms of assembly, homodimer. [2Fe-2S] cluster serves as cofactor. The cofactor is Mg(2+).

The catalysed reaction is (2R)-2,3-dihydroxy-3-methylbutanoate = 3-methyl-2-oxobutanoate + H2O. The enzyme catalyses (2R,3R)-2,3-dihydroxy-3-methylpentanoate = (S)-3-methyl-2-oxopentanoate + H2O. It participates in amino-acid biosynthesis; L-isoleucine biosynthesis; L-isoleucine from 2-oxobutanoate: step 3/4. It functions in the pathway amino-acid biosynthesis; L-valine biosynthesis; L-valine from pyruvate: step 3/4. Functions in the biosynthesis of branched-chain amino acids. Catalyzes the dehydration of (2R,3R)-2,3-dihydroxy-3-methylpentanoate (2,3-dihydroxy-3-methylvalerate) into 2-oxo-3-methylpentanoate (2-oxo-3-methylvalerate) and of (2R)-2,3-dihydroxy-3-methylbutanoate (2,3-dihydroxyisovalerate) into 2-oxo-3-methylbutanoate (2-oxoisovalerate), the penultimate precursor to L-isoleucine and L-valine, respectively. This chain is Dihydroxy-acid dehydratase, found in Xylella fastidiosa (strain M12).